The following is a 307-amino-acid chain: Dihydroorotate dehydrogenase A (fumarate) (307 aa).

FMN contacts are provided by residues serine 21 and 46–47; that span reads KT. Residues lysine 46, 70-74, and asparagine 130 contribute to the substrate site; that span reads NSVGL. Asparagine 130 serves as a coordination point for FMN. Catalysis depends on cysteine 133, which acts as the Nucleophile. Residues lysine 168 and isoleucine 194 each coordinate FMN. 195-196 serves as a coordination point for substrate; the sequence is NT. Residues glycine 220, 246–247, and 268–269 each bind FMN; these read GG and GS.

Belongs to the dihydroorotate dehydrogenase family. Type 1 subfamily. In terms of assembly, homodimer. It depends on FMN as a cofactor.

It localises to the cytoplasm. It carries out the reaction (S)-dihydroorotate + fumarate = orotate + succinate. Its pathway is pyrimidine metabolism; UMP biosynthesis via de novo pathway. Functionally, catalyzes the conversion of dihydroorotate to orotate with fumarate as the electron acceptor. The protein is Dihydroorotate dehydrogenase A (fumarate) (pyrD) of Lactobacillus delbrueckii subsp. bulgaricus (strain ATCC 11842 / DSM 20081 / BCRC 10696 / JCM 1002 / NBRC 13953 / NCIMB 11778 / NCTC 12712 / WDCM 00102 / Lb 14).